The following is a 291-amino-acid chain: MIVLKWLFLTISPCDAAEPWQLGSQDAATPIMQGIIDLHHDIFFFLILILVFVLWILVRALWHFHYKKNAIPQRIVHGTTIEILRTIFPCFISIFIVEPSFALALDDAAEALFPNTAPTPSNTSSSEDSFGLRVLSEPWPITRNLGLESSICNRIRLLEAANSPFLLGKEKGQYWGEIQECLYNVSEQREYYRLLDFENRDLQIRERKHSCLEVFRGVLLRNPYLEERAAYSPQEAFFDFLNERRDALDISNPGSSPAEMDRLEILFLGEIERDLLRRGDESLYIKQLLGD.

2 consecutive transmembrane segments (helical) span residues 42–62 (IFFF…RALW) and 86–106 (TIFP…LALD).

It belongs to the cytochrome c oxidase subunit 2 family.

Its subcellular location is the mitochondrion membrane. This is an uncharacterized protein from Arabidopsis thaliana (Mouse-ear cress).